The sequence spans 324 residues: MAHCYYNSKRGCNRVMKTVALVVLISTVMVEESRGDSQEDKKRPIWNIGHMVNAVKQIEEFLDLGANALEADVTFDDNGNPKWTYHGTPCDCFRDCLRWEYVDEYLKRIRELTSPGSSKFRKGFILLMLDLKISKLSDNAKSKAGKEIADMIIKRLWSGSGEKAQLYIVLSFPYVNDIEFVRAFRERVKSKGFASEAEKRIGWDISGNEDLGKIRDAYQKLGITDNVWQSDGITNCLTRSHDRLAEAVCKRDSDKEWPSLKKVYYWTVDKQSSMKEALKVGVDGMITNDPDDLVAVLNEFSGTHRLANINDSPWQKIPRPKSNC.

Residues 1-35 (MAHCYYNSKRGCNRVMKTVALVVLISTVMVEESRG) form the signal peptide. His-50 is a catalytic residue. The Mg(2+) site is built by Glu-70 and Asp-72. His-86 (nucleophile) is an active-site residue. Cystine bridges form between Cys-90–Cys-96 and Cys-92–Cys-236. Asp-130 lines the Mg(2+) pocket.

It belongs to the arthropod phospholipase D family. Class II subfamily. Mg(2+) is required as a cofactor. In terms of tissue distribution, expressed by the venom gland.

Its subcellular location is the secreted. It catalyses the reaction an N-(acyl)-sphingosylphosphocholine = an N-(acyl)-sphingosyl-1,3-cyclic phosphate + choline. It carries out the reaction an N-(acyl)-sphingosylphosphoethanolamine = an N-(acyl)-sphingosyl-1,3-cyclic phosphate + ethanolamine. The catalysed reaction is a 1-acyl-sn-glycero-3-phosphocholine = a 1-acyl-sn-glycero-2,3-cyclic phosphate + choline. The enzyme catalyses a 1-acyl-sn-glycero-3-phosphoethanolamine = a 1-acyl-sn-glycero-2,3-cyclic phosphate + ethanolamine. In terms of biological role, dermonecrotic toxins cleave the phosphodiester linkage between the phosphate and headgroup of certain phospholipids (sphingolipid and lysolipid substrates), forming an alcohol (often choline) and a cyclic phosphate. This toxin acts on sphingomyelin (SM) with a high activity. It may also act on ceramide phosphoethanolamine (CPE), lysophosphatidylcholine (LPC) and lysophosphatidylethanolamine (LPE), but not on lysophosphatidylserine (LPS), and lysophosphatidylglycerol (LPG). It acts by transphosphatidylation, releasing exclusively cyclic phosphate products as second products. In vivo, shows dermonecrotic activity when intradermally injected into rabbit skin and is lethal to mice. Induces increased vascular permeability, edema, inflammatory response, and platelet aggregation. Does not show hemolytic activity (at up to 50 ug). The polypeptide is Dermonecrotic toxin Hl-PLD1 (Hemiscorpius lepturus (Scorpion)).